The primary structure comprises 380 residues: Crotonobetainyl-CoA reductase (380 aa).

This sequence belongs to the acyl-CoA dehydrogenase family. In terms of assembly, homotetramer. It depends on FAD as a cofactor.

Its subcellular location is the cytoplasm. The catalysed reaction is 4-(trimethylamino)butanoyl-CoA + oxidized [electron-transfer flavoprotein] + H(+) = crotonobetainyl-CoA + reduced [electron-transfer flavoprotein]. It functions in the pathway amine and polyamine metabolism; carnitine metabolism. Catalyzes the reduction of crotonobetainyl-CoA to gamma-butyrobetainyl-CoA. This chain is Crotonobetainyl-CoA reductase, found in Shigella flexneri serotype 5b (strain 8401).